The primary structure comprises 295 residues: HTH-type transcriptional regulator TdfR (295 aa).

Residues 1–58 (MEFRQLRYFVAAAEEGNVGAAARRLHISQPPVTRQIHALEQHLGVLLFERSARGVQLT) form the HTH lysR-type domain. Positions 18–37 (VGAAARRLHISQPPVTRQIH) form a DNA-binding region, H-T-H motif.

The protein belongs to the LysR transcriptional regulatory family.

The protein localises to the cytoplasm. Involved in the regulation of 3-chlorocatechol degradation. Transcriptional regulator of tfdB expression. Acts as a repressor in the absence of its effector (either 2-cis-chlorodiene lactone or chloromaleylacetate) but acts as an activator when its effector is present. The protein is HTH-type transcriptional regulator TdfR (tfdR) of Cupriavidus pinatubonensis (strain JMP 134 / LMG 1197) (Cupriavidus necator (strain JMP 134)).